Reading from the N-terminus, the 348-residue chain is Zinc finger protein 843 (348 aa).

The C2H2-type 1 zinc-finger motif lies at C33–H55. The segment at F145–H167 adopts a C2H2-type 2; degenerate zinc-finger fold. The span at A184 to G195 shows a compositional bias: polar residues. 2 disordered regions span residues A184–G203 and A256–A329.

This is Zinc finger protein 843 (ZNF843) from Homo sapiens (Human).